The sequence spans 133 residues: Rodlin protein RdlB (133 aa).

Residues 1–28 form the signal peptide; that stretch reads MIKKVVAYAAIAASVMGASAAAAPQAMA. Amyloid-forming regions lie at residues 45 to 57 and 59 to 70; these read QYFGNSMTTGNMS and QMALIQGSFNKP. The tract at residues 45-70 is required for amyloid formation; it reads QYFGNSMTTGNMSPQMALIQGSFNKP.

Belongs to the rodlin family.

Its subcellular location is the secreted. It localises to the cell wall. The protein localises to the spore wall. Forms part of the rodlet layer on the spore surface; despite their high similarity both RdlA and RdlB are required for rodlet formation. Plays a role in cell adhesion to polystyrene plates. Forms amyloid-like fibrils in vitro composed of stacked beta-sheets. This chain is Rodlin protein RdlB, found in Streptomyces coelicolor (strain ATCC BAA-471 / A3(2) / M145).